The sequence spans 412 residues: 4-hydroxy-3-methylbut-2-en-1-yl diphosphate synthase (ferredoxin) (412 aa).

Positions 1–12 are enriched in polar residues; that stretch reads MQTLDRPNAPSQ. Residues 1–22 form a disordered region; it reads MQTLDRPNAPSQQPYPEPVYPR. 4 residues coordinate [4Fe-4S] cluster: C314, C317, C348, and E355.

It belongs to the IspG family. Requires [4Fe-4S] cluster as cofactor.

The catalysed reaction is (2E)-4-hydroxy-3-methylbut-2-enyl diphosphate + 2 oxidized [2Fe-2S]-[ferredoxin] + H2O = 2-C-methyl-D-erythritol 2,4-cyclic diphosphate + 2 reduced [2Fe-2S]-[ferredoxin] + H(+). It participates in isoprenoid biosynthesis; isopentenyl diphosphate biosynthesis via DXP pathway; isopentenyl diphosphate from 1-deoxy-D-xylulose 5-phosphate: step 5/6. Converts 2C-methyl-D-erythritol 2,4-cyclodiphosphate (ME-2,4cPP) into 1-hydroxy-2-methyl-2-(E)-butenyl 4-diphosphate. The chain is 4-hydroxy-3-methylbut-2-en-1-yl diphosphate synthase (ferredoxin) from Synechococcus sp. (strain JA-3-3Ab) (Cyanobacteria bacterium Yellowstone A-Prime).